Here is a 485-residue protein sequence, read N- to C-terminus: Adenosylhomocysteinase (485 aa).

Substrate contacts are provided by threonine 64, aspartate 139, and glutamate 205. NAD(+) is bound at residue 206–208 (TTT). 2 residues coordinate substrate: lysine 235 and aspartate 239. NAD(+)-binding positions include asparagine 240, 269 to 274 (GYGDVG), glutamate 292, asparagine 327, 348 to 350 (IGH), and asparagine 397.

The protein belongs to the adenosylhomocysteinase family. In terms of assembly, homotetramer. It depends on NAD(+) as a cofactor.

The catalysed reaction is S-adenosyl-L-homocysteine + H2O = L-homocysteine + adenosine. Its pathway is amino-acid biosynthesis; L-homocysteine biosynthesis; L-homocysteine from S-adenosyl-L-homocysteine: step 1/1. Its function is as follows. Adenosylhomocysteine is a competitive inhibitor of S-adenosyl-L-methionine-dependent methyl transferase reactions; therefore adenosylhomocysteinase may play a key role in the control of methylations via regulation of the intracellular concentration of adenosylhomocysteine. The chain is Adenosylhomocysteinase (SAHH) from Triticum aestivum (Wheat).